The following is a 330-amino-acid chain: Lipoyl synthase (330 aa).

7 residues coordinate [4Fe-4S] cluster: Cys-77, Cys-82, Cys-88, Cys-103, Cys-107, Cys-110, and Ser-317. One can recognise a Radical SAM core domain in the interval 89 to 306 (FNHGTATFMI…RSEAERMGFE (218 aa)).

The protein belongs to the radical SAM superfamily. Lipoyl synthase family. [4Fe-4S] cluster serves as cofactor.

It is found in the cytoplasm. The catalysed reaction is [[Fe-S] cluster scaffold protein carrying a second [4Fe-4S](2+) cluster] + N(6)-octanoyl-L-lysyl-[protein] + 2 oxidized [2Fe-2S]-[ferredoxin] + 2 S-adenosyl-L-methionine + 4 H(+) = [[Fe-S] cluster scaffold protein] + N(6)-[(R)-dihydrolipoyl]-L-lysyl-[protein] + 4 Fe(3+) + 2 hydrogen sulfide + 2 5'-deoxyadenosine + 2 L-methionine + 2 reduced [2Fe-2S]-[ferredoxin]. Its pathway is protein modification; protein lipoylation via endogenous pathway; protein N(6)-(lipoyl)lysine from octanoyl-[acyl-carrier-protein]: step 2/2. In terms of biological role, catalyzes the radical-mediated insertion of two sulfur atoms into the C-6 and C-8 positions of the octanoyl moiety bound to the lipoyl domains of lipoate-dependent enzymes, thereby converting the octanoylated domains into lipoylated derivatives. This is Lipoyl synthase from Actinobacillus pleuropneumoniae serotype 3 (strain JL03).